A 123-amino-acid polypeptide reads, in one-letter code: uncharacterized protein (123 aa).

The protein to insertion element IS1016 transposase.

This is an uncharacterized protein from Haemophilus influenzae (strain ATCC 51907 / DSM 11121 / KW20 / Rd).